Consider the following 951-residue polypeptide: Valine--tRNA ligase (951 aa).

A 'HIGH' region motif is present at residues 42-52 (PNVTGSLHMGH). The 'KMSKS' region motif lies at 554-558 (KMSKS). ATP is bound at residue Lys557. Residues 880–944 (AGLINKEDEL…AEAKAKLIEQ (65 aa)) are a coiled coil.

Belongs to the class-I aminoacyl-tRNA synthetase family. ValS type 1 subfamily. As to quaternary structure, monomer.

The protein localises to the cytoplasm. The catalysed reaction is tRNA(Val) + L-valine + ATP = L-valyl-tRNA(Val) + AMP + diphosphate. Catalyzes the attachment of valine to tRNA(Val). As ValRS can inadvertently accommodate and process structurally similar amino acids such as threonine, to avoid such errors, it has a 'posttransfer' editing activity that hydrolyzes mischarged Thr-tRNA(Val) in a tRNA-dependent manner. This Shigella flexneri protein is Valine--tRNA ligase.